Consider the following 471-residue polypeptide: Eremophilane O-acetyltransferase ORF8 (471 aa).

The protein belongs to the fumigaclavine B O-acetyltransferase family. As to quaternary structure, monomer.

It participates in sesquiterpene biosynthesis. Its function is as follows. O-acetyltransferase; part of the gene cluster that mediates the biosynthesis of PR-toxin, a bicyclic sesquiterpene belonging to the eremophilane class and acting as a mycotoxin. The first step of the pathway is catalyzed by the aristolochene synthase which performs the cyclization of trans,trans-farnesyl diphosphate (FPP) to the bicyclic sesquiterpene aristolochene. Following the formation of aristolochene, the non-oxygenated aristolochene is converted to the trioxygenated intermediate eremofortin B, via 7-epi-neopetasone. This conversion appears to involve three enzymes, a hydroxysterol oxidase-like enzyme, the quinone-oxidase prx3 that forms the quinone-type-structure in the bicyclic nucleus of aristolochene with the C8-oxo group and the C-3 hydroxyl group, and the P450 monooxygenase ORF6 that introduces the epoxide at the double bond between carbons 1 and 2. No monoxy or dioxy-intermediates have been reported to be released to the broth, so these three early oxidative reactions may be coupled together. Eremofortin B is further oxidized by another P450 monooxygenase, that introduces a second epoxide between carbons 7 and 11 prior to acetylation to eremofortin A by the acetyltransferase ORF8. The second epoxidation may be performed by a second P450 monooxygenase. After the acetylation step, eremofortin A is converted to eremofortin C and then to PR-toxin. First the conversion of eremofortin A to eremofortin C proceeds by oxidation of the side chain of the molecule at C-12 and is catalyzed by the short-chain oxidoreductase prx1. The cytochrome P450 monooxygenase ORF6 is probably also involved in this step. The primary alcohol formed at C-12 is finally oxidized by the short-chain alcohol dehydrogenase prx4 that forms PR-toxin. The polypeptide is Eremophilane O-acetyltransferase ORF8 (Penicillium roqueforti (strain FM164)).